The sequence spans 1015 residues: GTPase-activating Rap/Ran-GAP domain-like protein 3 (1015 aa).

Residues Leu-200 to Leu-416 form the Rap-GAP domain. Residues Pro-498–Tyr-812 form the CNH domain. 2 disordered regions span residues Ser-821–Tyr-842 and Glu-924–Ser-1004. Residues Ser-823–Ser-835 show a composition bias toward low complexity. A compositionally biased stretch (basic and acidic residues) spans Lys-949 to Ala-959.

It belongs to the GARNL3 family.

The sequence is that of GTPase-activating Rap/Ran-GAP domain-like protein 3 (garnl3) from Danio rerio (Zebrafish).